We begin with the raw amino-acid sequence, 553 residues long: Glucose-6-phosphate isomerase (553 aa).

Glu-357 functions as the Proton donor in the catalytic mechanism. Active-site residues include His-388 and Lys-514. Positions 524–553 (ITGAGSPPPQSDSSTDGLVRRYRTERGRAG) are disordered. A compositionally biased stretch (basic and acidic residues) spans 541-553 (LVRRYRTERGRAG).

This sequence belongs to the GPI family.

It localises to the cytoplasm. The enzyme catalyses alpha-D-glucose 6-phosphate = beta-D-fructose 6-phosphate. The protein operates within carbohydrate biosynthesis; gluconeogenesis. Its pathway is carbohydrate degradation; glycolysis; D-glyceraldehyde 3-phosphate and glycerone phosphate from D-glucose: step 2/4. In terms of biological role, catalyzes the reversible isomerization of glucose-6-phosphate to fructose-6-phosphate. The sequence is that of Glucose-6-phosphate isomerase from Mycobacterium bovis (strain BCG / Tokyo 172 / ATCC 35737 / TMC 1019).